The following is a 130-amino-acid chain: Cystatin (130 aa).

The N-terminal stretch at 1-19 (MEWKIVVPLLAVAFTVANA) is a signal peptide. The Secondary area of contact signature appears at 67–71 (QVVSG). 2 cysteine pairs are disulfide-bonded: Cys85–Cys94 and Cys108–Cys128.

It belongs to the cystatin family. As to expression, ubiquitous expression including brain, white muscle, heart, gill, kidney, spleen, liver and skin with the highest and lowest level in brain and gill, respectively.

The protein resides in the secreted. Cysteine proteinase inhibitor. This chain is Cystatin, found in Oncorhynchus keta (Chum salmon).